We begin with the raw amino-acid sequence, 299 residues long: Probable alpha-L-glutamate ligase (299 aa).

The region spanning 104–287 (LQLLAREGIE…VSGKIIEFLE (184 aa)) is the ATP-grasp domain. Residues Lys-141, 178-179 (EF), Asp-187, and 211-213 (RSN) contribute to the ATP site. 3 residues coordinate Mg(2+): Asp-248, Glu-260, and Asn-262. 3 residues coordinate Mn(2+): Asp-248, Glu-260, and Asn-262.

The protein belongs to the RimK family. The cofactor is Mg(2+). It depends on Mn(2+) as a cofactor.

The sequence is that of Probable alpha-L-glutamate ligase from Trichodesmium erythraeum (strain IMS101).